A 30-amino-acid chain; its full sequence is Dermaseptin-S3 (30 aa).

The protein belongs to the frog skin active peptide (FSAP) family. Dermaseptin subfamily. Monomer and oligomer. Forms aggregates in aqueous environments. Expressed by the skin glands.

The protein resides in the secreted. In terms of biological role, potent antimicrobial peptide with activity against bacteria and protozoa. Also has activity against fungi. Probably acts by disturbing membrane functions with its amphipathic structure. Binds to healthy erythrocytes (this binding is receptor independent), but has very weak hemolytic activity. Does not bind to P.falciparum infected erythrocytes, but accumulates within the parasite. Kills the parasite, but has no hemolytic activity on the host cell. This Phyllomedusa sauvagei (Sauvage's leaf frog) protein is Dermaseptin-S3.